The sequence spans 741 residues: NAD(P)H-quinone oxidoreductase subunit 5, chloroplastic (741 aa).

Transmembrane regions (helical) follow at residues 9 to 29 (WIIP…LLLV), 40 to 60 (WAFP…DLSI), 89 to 109 (IDPL…MVLI), 122 to 139 (LRFF…LGLV), 147 to 167 (IHIF…FWFT), 185 to 205 (GDFG…SLEF), 219 to 239 (NGVN…GAVA), 258 to 278 (TPIS…FLVA), 280 to 300 (LLPI…LGII), 396 to 416 (TTFL…CFWS), 425 to 445 (WLYS…TAFY), 544 to 564 (LFPL…GIPF), 603 to 623 (IYSV…YGSV), and 719 to 739 (YLFV…FYFL).

The protein belongs to the complex I subunit 5 family. As to quaternary structure, NDH is composed of at least 16 different subunits, 5 of which are encoded in the nucleus.

The protein resides in the plastid. Its subcellular location is the chloroplast thylakoid membrane. The catalysed reaction is a plastoquinone + NADH + (n+1) H(+)(in) = a plastoquinol + NAD(+) + n H(+)(out). The enzyme catalyses a plastoquinone + NADPH + (n+1) H(+)(in) = a plastoquinol + NADP(+) + n H(+)(out). Its function is as follows. NDH shuttles electrons from NAD(P)H:plastoquinone, via FMN and iron-sulfur (Fe-S) centers, to quinones in the photosynthetic chain and possibly in a chloroplast respiratory chain. The immediate electron acceptor for the enzyme in this species is believed to be plastoquinone. Couples the redox reaction to proton translocation, and thus conserves the redox energy in a proton gradient. In Liriodendron tulipifera (Tuliptree), this protein is NAD(P)H-quinone oxidoreductase subunit 5, chloroplastic (ndhF).